A 1451-amino-acid chain; its full sequence is MPEQERKVTAKEASRKILSKLALPTRPWGQSMKQSFAFDNVGYEGGLDSTCFILQLTTGVVSILGMTCHSCVKSIEDRISSLKGIVSIKVSLEQGSATVKYVPSVLNLQQICLQIEDMGFEASAAEGKAASWPSRSSPAQEAVVKLRVEGMTCQSCVSSIEGKIRKLQGVVRVKVSLSNQEAVITYQPYLIQPEDLRDHICDMGFEAAIKNRTAPLRLGPIDINKLESTNLKRAAVPPIQNSNHLETPGHQQNHLATLPLRIDGMHCKSCVLNIEGNIGQLPGVQNIHVSLENKTAQVQYDSSCITPLFLQTAIEALPPGYFKVSLPDGLEKESGSSSVPSLGSSQRQQEPGPCRTAVLTITGIPRDSSVQPMEDMLSQMKGVQQIDISLAEGTGAVLYDPSVVSSDELRTAVEDMGFEVSVNPENITTNRVSSGNSVPQAVGDSPGSVQNMASDTRGLLTHQGPGYLSDSPPSPGGTASQKCFVQIKGMTCASCVSNIERSLQRHAGILSVLVALMSGKAEVKYDPEVIQSPRIAQLIEDLGFEAAIMEDNTVSEGDIELIITGMTCASCVHNIESKLTRTNGITYASVALATSKAHVKFDPEIIGPRDIIKVIEEIGFHASLAHRNPNAHHLDHKTEIKQWKKSFLCSLVFGIPVMGLMIYMLIPSSKPHETMVLDHNIIPGLSVLNLIFFILCTFVQFLGGWYFYVQAYKSLRHKSANMDVLIVLATTIAYAYSLVILVVAIAEKAEKSPVTFFDTPPMLFVFIALGRWLEHVAKSKTSEALAKLMSLQATEATVVTLGEDNLILREEQVPMELVQRGDIIKVVPGGKFPVDGKVLEGNTMADESLITGEAMPVTKKPGSIVIAGSINAHGSVLIKATHVGNDTTLAQIVKLVEEAQMSKAPIQQLADRFSGYFVPFIIIISTLTLVVWIIIGFVDFGIVQKYFPSPSKHISQTEVIIRFAFQTSITVLCIACPCSLGLATPTAVMVGTGVAAQNGVLIKGGKPLEMAHKIKTVMFDKTGTITHGVPRVMRFLLLVDVATLSLRKVLAVVGTAEASSEHPLGVAVTKYCKEELGTETLGYSTDFQAVPGCGISCKVSNVESILAHRGPTAHPIGVGNPPIGEGTGPQTFSVLIGNREWMRRNGLTISSDISDAMTDHEMKGQTAILVAIDGVLCGMIAIADAVKPEAALASITLKSMGVDVALITGDNRKTARAIATQVGINKVFAEVLPSHKVAKVQELQNKGKKVAMVGDGVNDSPALAQADVGIAIGTGTDVAIDAADVVLIRNDLLDVVASIHLSKRTVRRIRVNLVLALIYNMVGIPIAAGVFMPIGIVLQPWMGSAAASSVSVVLSSLQLKCYRKPDLERYEAQAHGRMKPLSASQVSVHVGMDDRRRDSPRATPWDQVSYVSQVSLSSLTSDRLSRHGGMAEDGGDKWSLLLSDRDEEQCI.

Over 1 to 646 (MPEQERKVTA…KTEIKQWKKS (646 aa)) the chain is Cytoplasmic. 3 HMA domains span residues 57-123 (TTGV…FEAS), 142-208 (AVVK…FEAA), and 256-322 (ATLP…PGYF). Cys68, Cys71, Cys153, Cys156, Cys267, and Cys270 together coordinate Cu(+). Residues 328-353 (DGLEKESGSSSVPSLGSSQRQQEPGP) are disordered. The segment covering 335 to 345 (GSSSVPSLGSS) has biased composition (low complexity). The region spanning 355-421 (RTAVLTITGI…AVEDMGFEVS (67 aa)) is the HMA 4 domain. 3 positions are modified to phosphoserine: Ser469, Ser471, and Ser474. HMA domains follow at residues 481–547 (QKCF…FEAA) and 557–623 (GDIE…FHAS). Cu(+) is bound by residues Cys492, Cys495, Cys568, and Cys571. Residues 647–668 (FLCSLVFGIPVMGLMIYMLIPS) traverse the membrane as a helical segment. The Extracellular portion of the chain corresponds to 669-690 (SKPHETMVLDHNIIPGLSVLNL). The helical transmembrane segment at 691 to 710 (IFFILCTFVQFLGGWYFYVQ) threads the bilayer. The Cytoplasmic portion of the chain corresponds to 711–717 (AYKSLRH). A helical transmembrane segment spans residues 718–738 (KSANMDVLIVLATTIAYAYSL). At 739-757 (VILVVAIAEKAEKSPVTFF) the chain is on the extracellular side. Residues 758–778 (DTPPMLFVFIALGRWLEHVAK) traverse the membrane as a helical segment. The Cytoplasmic portion of the chain corresponds to 779 to 912 (SKTSEALAKL…KAPIQQLADR (134 aa)). The chain crosses the membrane as a helical span at residues 913–935 (FSGYFVPFIIIISTLTLVVWIII). Over 936–965 (GFVDFGIVQKYFPSPSKHISQTEVIIRFAF) the chain is Extracellular. The chain crosses the membrane as a helical span at residues 966–987 (QTSITVLCIACPCSLGLATPTA). The Cytoplasmic segment spans residues 988–1310 (VMVGTGVAAQ…LSKRTVRRIR (323 aa)). Catalysis depends on Asp1020, which acts as the 4-aspartylphosphate intermediate. Mg(2+)-binding residues include Asp1255 and Asp1259. A helical membrane pass occupies residues 1311–1328 (VNLVLALIYNMVGIPIAA). Residues 1329 to 1339 (GVFMPIGIVLQ) lie on the Extracellular side of the membrane. The chain crosses the membrane as a helical span at residues 1340 to 1357 (PWMGSAAASSVSVVLSSL). Topologically, residues 1358–1451 (QLKCYRKPDL…LSDRDEEQCI (94 aa)) are cytoplasmic. A phosphoserine mark is found at Ser1384 and Ser1443.

Belongs to the cation transport ATPase (P-type) (TC 3.A.3) family. Type IB subfamily. In terms of assembly, monomer. Interacts with COMMD1/MURR1. Interacts with DCTN4, in a copper-dependent manner. Interacts with ATOX1. Interacts (via C-terminus) with ZBTB16/PLZF. In terms of tissue distribution, expressed in brain, liver, kidney, spleen and stomach. In brain, detected in neuronal cells of the hippocampal formation, olfactory bulbs, cerebellum, cerebral cortex and nuclei in the brainstem. Isoform PINA is expressed during night in adult pineal gland (pinealocytes) and retina. Isoform PINA is not detected in other tissue.

It is found in the golgi apparatus. It localises to the trans-Golgi network membrane. Its subcellular location is the late endosome. The catalysed reaction is Cu(+)(in) + ATP + H2O = Cu(+)(out) + ADP + phosphate + H(+). In terms of biological role, copper ion transmembrane transporter involved in the export of copper out of the cells, such as the efflux of hepatic copper into the bile. The protein is Copper-transporting ATPase 2 (Atp7b) of Rattus norvegicus (Rat).